Consider the following 422-residue polypeptide: tRNA(Met) cytidine acetate ligase (422 aa).

Residues 7 to 20 (ITEY…HLYH), Gly-102, Asn-172, and Arg-197 each bind ATP.

The protein belongs to the TmcAL family.

It is found in the cytoplasm. It catalyses the reaction cytidine(34) in elongator tRNA(Met) + acetate + ATP = N(4)-acetylcytidine(34) in elongator tRNA(Met) + AMP + diphosphate. Catalyzes the formation of N(4)-acetylcytidine (ac(4)C) at the wobble position of elongator tRNA(Met), using acetate and ATP as substrates. First activates an acetate ion to form acetyladenylate (Ac-AMP) and then transfers the acetyl group to tRNA to form ac(4)C34. In Halothermothrix orenii (strain H 168 / OCM 544 / DSM 9562), this protein is tRNA(Met) cytidine acetate ligase.